The following is an 818-amino-acid chain: MLLWPGASGLPPPRIFPSLLVVVALVGLLPVLRSYGLQISPTASTIRGSEPPRERSIGDVTTAPPELAPESRPVNHSFAEHSPKARKAFPVLGIDYQHVRIPFEIALWILLACLMKIGFHVIPTISSIVPESCLLIVVGLLVGGLIKGVGETPPILQSEVFFLFLLPPIILDAGYFLPLRQFTENLGTILIFAVVGTLWNAFFLGGLMYAVCLVGGEQINNIGLLENLLFGSIISAVDPVAVLAVFEEIHINELLHILVFGESLLNDAVTVVLYHLFEEFANYDRVGIVDIILGFLSFFVVSLGGVFVGVVYGVIAAFTSRFTSHIRVIEPLFVFLYSYMAYLSAELFHLSGIMALIASGVVMRPYVEANISHKSHTTIKYFLKMWSSVSETLIFIFLGVSTVAGSHHWNWTFVISTLLFCLIARVLGVLGLTWFINKFRIVKLTPKDQFIIAYGGLRGAIAFSLGYLLDKKHFPMCDLFLTAIITVIFFTVFVQGMTIRPLVDLLAVKKKQETKRSINEEIHTQFLDHLLTGIEDICGHYGHHHWKDKLNRFNKKYVKKCLIAGERSKEPQLIAFYHKMEMKQAIELVESGGMGKIPSAVSTVSMQNIHPKSLPAERILPALSKDKEEEIRKILRNNLQKTRQRLRSYNRHTLVADPYEEAWNQMLLRRQKARQLEQKISNYLTVPAHKLDSPTMSRARIGSDPLAYEPKADLPVITIDPASPQSPESVDLVNEELKGKVLGLSRDPGRLAEEEEDDKDPDGGLTMRTKEPSSPGTDDVFTPAPSDSPSSQRIQRCLSDPGPHPEPGEGEPFIPKGQ.

The Extracellular portion of the chain corresponds to 1–98 (MLLWPGASGL…FPVLGIDYQH (98 aa)). The interval 44–76 (STIRGSEPPRERSIGDVTTAPPELAPESRPVNH) is disordered. N-linked (GlcNAc...) asparagine glycosylation occurs at asparagine 75. Residues 99–121 (VRIPFEIALWILLACLMKIGFHV) form a helical membrane-spanning segment. The Cytoplasmic segment spans residues 122–130 (IPTISSIVP). The chain crosses the membrane as a helical span at residues 131 to 148 (ESCLLIVVGLLVGGLIKG). The Extracellular portion of the chain corresponds to 149–158 (VGETPPILQS). The helical transmembrane segment at 159 to 176 (EVFFLFLLPPIILDAGYF) threads the bilayer. The Cytoplasmic segment spans residues 177–186 (LPLRQFTENL). Residues 187–215 (GTILIFAVVGTLWNAFFLGGLMYAVCLVG) traverse the membrane as a helical segment. Over 216-222 (GEQINNI) the chain is Extracellular. Residues 223-249 (GLLENLLFGSIISAVDPVAVLAVFEEI) form a helical membrane-spanning segment. At 250-252 (HIN) the chain is on the cytoplasmic side. A helical transmembrane segment spans residues 253-283 (ELLHILVFGESLLNDAVTVVLYHLFEEFANY). Residues 284–287 (DRVG) are Extracellular-facing. A helical membrane pass occupies residues 288–322 (IVDIILGFLSFFVVSLGGVFVGVVYGVIAAFTSRF). The Cytoplasmic segment spans residues 323–328 (TSHIRV). A helical membrane pass occupies residues 329–341 (IEPLFVFLYSYMA). The Extracellular segment spans residues 342–350 (YLSAELFHL). Residues 351-371 (SGIMALIASGVVMRPYVEANI) traverse the membrane as a helical segment. The Cytoplasmic portion of the chain corresponds to 372–373 (SH). The chain crosses the membrane as a helical span at residues 374–404 (KSHTTIKYFLKMWSSVSETLIFIFLGVSTVA). Residues 405 to 410 (GSHHWN) lie on the Extracellular side of the membrane. A helical membrane pass occupies residues 411–438 (WTFVISTLLFCLIARVLGVLGLTWFINK). Topologically, residues 439–444 (FRIVKL) are cytoplasmic. Residues 445–469 (TPKDQFIIAYGGLRGAIAFSLGYLL) form a helical membrane-spanning segment. Residues 470-475 (DKKHFP) are Extracellular-facing. The chain crosses the membrane as a helical span at residues 476-505 (MCDLFLTAIITVIFFTVFVQGMTIRPLVDL). Residues 503 to 545 (VDLLAVKKKQETKRSINEEIHTQFLDHLLTGIEDICGHYGHHH) form an interaction with TESC region. Over 506-818 (LAVKKKQETK…EGEPFIPKGQ (313 aa)) the chain is Cytoplasmic. Residues 509–516 (KKKQETKR) are PI(4,5)P2-binding region. An interaction with CHP2 region spans residues 515–545 (KRSINEEIHTQFLDHLLTGIEDICGHYGHHH). The confers pH-dependent PI(4,5)P2 binding stretch occupies residues 540-545 (HYGHHH). The PI(4,5)P2-binding region stretch occupies residues 552–560 (RFNKKYVKK). Residues serine 599 and serine 602 each carry the phosphoserine modification. Phosphothreonine is present on threonine 603. A phosphoserine mark is found at serine 605 and serine 648. Positions 633–818 (KILRNNLQKT…EGEPFIPKGQ (186 aa)) are interaction with TESC. Positions 633-818 (KILRNNLQKT…EGEPFIPKGQ (186 aa)) are interaction with CALM1. Residues 684–687 (LTVP) form an interaction with PPP3CA region. Phosphoserine occurs at positions 693, 697, and 703. The segment at 715–720 (PVITID) is interaction with PPP3CA. Serine 723, serine 726, and serine 729 each carry phosphoserine. Positions 741 to 818 (VLGLSRDPGR…EGEPFIPKGQ (78 aa)) are disordered. Threonine 782 carries the post-translational modification Phosphothreonine. The segment covering 785–794 (PSDSPSSQRI) has biased composition (polar residues). Residues serine 788, serine 790, and serine 799 each carry the phosphoserine modification.

Belongs to the monovalent cation:proton antiporter 1 (CPA1) transporter (TC 2.A.36) family. In terms of assembly, homodimer; dimerization is crucial for its function. Oligomer. Interacts with CALM in a calcium-dependent manner. Interacts with TESC. Interacts (via the juxtamembrane region of the cytoplasmic C-terminal domain) with CHP1; the interaction occurs at the plasma membrane in a calcium-dependent manner. Interacts with CHP2; the interaction occurs in a calcium-dependent manner. Interacts with EZR; regulates the cytoskeletal interactions of SLC9A1 and promotes stress fiber formation. In terms of processing, ubiquitinated, leading to its degradation by the proteasome. Ubiquitination is reduced by CHP1. O-glycosylated. Post-translationally, palmitoylated; may play a major role in SLC9A1 regulation. In terms of processing, phosphorylation at Thr-782 increases SLC9A1 activity. Specifically dephosphorylated at Thr-782 by PPP3CA that negatively regulates SLC9A1 activity. Phosphorylation at Ser-648 by AKT1 reduces SLC9A1 binding to CALM1.

It is found in the cell membrane. It localises to the basolateral cell membrane. It carries out the reaction Na(+)(in) + H(+)(out) = Na(+)(out) + H(+)(in). It catalyses the reaction Li(+)(out) + H(+)(in) = Li(+)(in) + H(+)(out). The enzyme catalyses Li(+)(in) + Na(+)(out) = Li(+)(out) + Na(+)(in). Activated at acidic pHs. Inhibited by amiloride and 5-amino-substituted derivatives. Inhibited by cariporide and eniporide. Phosphatidylinositol 4,5-bisphosphate (PI(4,5)P2) and phosphatidylinositol 3,4,5-trisphosphate (PI(3,4,5)P3) bind and differentially regulate SLC9A1 activity. Its function is as follows. Electroneutral Na(+) /H(+) antiporter that extrudes Na(+) in exchange for external protons driven by the inward sodium ion chemical gradient, protecting cells from acidification that occurs from metabolism. Exchanges intracellular H(+) ions for extracellular Na(+) in 1:1 stoichiometry. Plays a key role in maintening intracellular pH neutral and cell volume, and thus is important for cell growth, proliferation, migration and survival. In addition, can transport lithium Li(+) and also functions as a Na(+)/Li(+) antiporter. SLC9A1 also functions in membrane anchoring and organization of scaffolding complexes that coordinate signaling inputs. This Bos taurus (Bovine) protein is Sodium/hydrogen exchanger 1 (SLC9A1).